The following is a 78-amino-acid chain: Acyl carrier protein (78 aa).

The Carrier domain occupies 1 to 76; it reads MSVAEKVKEI…DAISFIEKKK (76 aa). Ser-36 is modified (O-(pantetheine 4'-phosphoryl)serine).

It belongs to the acyl carrier protein (ACP) family. In terms of processing, 4'-phosphopantetheine is transferred from CoA to a specific serine of apo-ACP by AcpS. This modification is essential for activity because fatty acids are bound in thioester linkage to the sulfhydryl of the prosthetic group.

It localises to the cytoplasm. It functions in the pathway lipid metabolism; fatty acid biosynthesis. Functionally, carrier of the growing fatty acid chain in fatty acid biosynthesis. The polypeptide is Acyl carrier protein (Solidesulfovibrio magneticus (strain ATCC 700980 / DSM 13731 / RS-1) (Desulfovibrio magneticus)).